The chain runs to 473 residues: Bifunctional protein HldE (473 aa).

The tract at residues Met1–Glu318 is ribokinase. Asn194 to Glu197 lines the ATP pocket. The active site involves Asp263. Positions Phe343–His473 are cytidylyltransferase.

This sequence in the N-terminal section; belongs to the carbohydrate kinase PfkB family. It in the C-terminal section; belongs to the cytidylyltransferase family. As to quaternary structure, homodimer.

The catalysed reaction is D-glycero-beta-D-manno-heptose 7-phosphate + ATP = D-glycero-beta-D-manno-heptose 1,7-bisphosphate + ADP + H(+). It carries out the reaction D-glycero-beta-D-manno-heptose 1-phosphate + ATP + H(+) = ADP-D-glycero-beta-D-manno-heptose + diphosphate. Its pathway is nucleotide-sugar biosynthesis; ADP-L-glycero-beta-D-manno-heptose biosynthesis; ADP-L-glycero-beta-D-manno-heptose from D-glycero-beta-D-manno-heptose 7-phosphate: step 1/4. It functions in the pathway nucleotide-sugar biosynthesis; ADP-L-glycero-beta-D-manno-heptose biosynthesis; ADP-L-glycero-beta-D-manno-heptose from D-glycero-beta-D-manno-heptose 7-phosphate: step 3/4. In terms of biological role, catalyzes the phosphorylation of D-glycero-D-manno-heptose 7-phosphate at the C-1 position to selectively form D-glycero-beta-D-manno-heptose-1,7-bisphosphate. Its function is as follows. Catalyzes the ADP transfer from ATP to D-glycero-beta-D-manno-heptose 1-phosphate, yielding ADP-D-glycero-beta-D-manno-heptose. The chain is Bifunctional protein HldE from Pseudomonas entomophila (strain L48).